The sequence spans 41 residues: Ornatin-A2 (41 aa).

The Cell attachment site motif lies at 33 to 35 (RGD).

This sequence belongs to the ornatin family.

The protein resides in the secreted. Functionally, potent inhibitor of fibrinogen interaction with platelet receptors expressed on glycoprotein IIb-IIIa complex. May prevent blood from clotting during either feeding and/or storage of ingested blood. This chain is Ornatin-A2, found in Placobdella ornata (Turtle leech).